The chain runs to 202 residues: Probable pathogenesis-related protein CaO19.2336 (202 aa).

The N-terminal stretch at 1 to 20 is a signal peptide; it reads MKTLLFIYLQLLLLLSIIIG. Residues N58 and N152 are each glycosylated (N-linked (GlcNAc...) asparagine). The SCP domain occupies 66 to 179; it reads LKEHNNKRKL…LNALYIVCSY (114 aa).

It belongs to the CRISP family.

The protein localises to the secreted. In terms of biological role, secreted protein that acts as a virulence factor during infections. The sequence is that of Probable pathogenesis-related protein CaO19.2336 from Candida albicans (strain SC5314 / ATCC MYA-2876) (Yeast).